The primary structure comprises 402 residues: Beta-peptidyl aminopeptidase BapA (402 aa).

The signal sequence occupies residues 1 to 29 (MTSTQRLWSGALPLLTALIVSIAATASLA). Ser-279 functions as the Nucleophile in the catalytic mechanism. Active-site proton donor/acceptor residues include Ser-317 and Glu-319.

Belongs to the peptidase S58 family. In terms of assembly, heterooctamer of 4 heterodimers ((alpha:beta)4); each heterodimer is composed of an alpha subunit and a beta subunit processed from the same precursor. Autoproteolytic processing to generate the alpha and beta subunit is required for self-activation and is proposed to use a similar mechanism as substrate cleavage.

The protein localises to the periplasm. The catalysed reaction is Cleaves N-terminal beta-homoamino acids from peptides composed of 2 to 6 amino acids.. With respect to regulation, inhibited by AEBSF (4-(2-aminoethyl)benzenesulfonyl fluoride, Pefabloc SC), ampicillin and AMP(hyd) (ampillicin-derived penicilloic acid). Beta-aminopeptidase that can cleave synthetic beta-peptides which consist of backbone-elongated beta-amino acid residues that are not processed by common proteolytic enzymes. Can cleave the beta-peptides beta-homoVal-beta-homoAla-beta-homoLeu and beta-homoAla-beta-homoLeu. Requires a beta-amino acid at the N-terminus of peptide substrates and cleaves the peptide bond between the N-terminal beta-amino acid and the amino acid at the second position of tripeptidic substrates of the general structure H-betahXaa-Ile-betahTyr-OH according to the following preferences with regard to the side chain of the N-terminal beta-amino acid: aliphatic and aromatic &gt; OH-containing &gt; hydrogen, basic and polar. In Sphingosinicella xenopeptidilytica, this protein is Beta-peptidyl aminopeptidase BapA.